Consider the following 625-residue polypeptide: 1,4-alpha-glucan branching enzyme GlgB (625 aa).

Residue aspartate 302 is the Nucleophile of the active site. The active-site Proton donor is glutamate 355.

It belongs to the glycosyl hydrolase 13 family. GlgB subfamily. Monomer.

It carries out the reaction Transfers a segment of a (1-&gt;4)-alpha-D-glucan chain to a primary hydroxy group in a similar glucan chain.. Its pathway is glycan biosynthesis; glycogen biosynthesis. Its function is as follows. Catalyzes the formation of the alpha-1,6-glucosidic linkages in glycogen by scission of a 1,4-alpha-linked oligosaccharide from growing alpha-1,4-glucan chains and the subsequent attachment of the oligosaccharide to the alpha-1,6 position. This Albidiferax ferrireducens (strain ATCC BAA-621 / DSM 15236 / T118) (Rhodoferax ferrireducens) protein is 1,4-alpha-glucan branching enzyme GlgB.